The following is a 724-amino-acid chain: Phosphoribosylformylglycinamidine synthase subunit PurL (724 aa).

Residue His46 is part of the active site. Residues Tyr49 and Lys88 each contribute to the ATP site. Glu90 is a Mg(2+) binding site. Substrate-binding positions include 91-94 (SHNH) and Arg113. The Proton acceptor role is filled by His92. Asp114 is a binding site for Mg(2+). Gln237 contributes to the substrate binding site. Asp265 lines the Mg(2+) pocket. Position 309–311 (309–311 (ESQ)) interacts with substrate. 2 residues coordinate ATP: Asp489 and Gly526. Asn527 provides a ligand contact to Mg(2+). Ser529 lines the substrate pocket.

The protein belongs to the FGAMS family. As to quaternary structure, monomer. Part of the FGAM synthase complex composed of 1 PurL, 1 PurQ and 2 PurS subunits.

It is found in the cytoplasm. It carries out the reaction N(2)-formyl-N(1)-(5-phospho-beta-D-ribosyl)glycinamide + L-glutamine + ATP + H2O = 2-formamido-N(1)-(5-O-phospho-beta-D-ribosyl)acetamidine + L-glutamate + ADP + phosphate + H(+). It participates in purine metabolism; IMP biosynthesis via de novo pathway; 5-amino-1-(5-phospho-D-ribosyl)imidazole from N(2)-formyl-N(1)-(5-phospho-D-ribosyl)glycinamide: step 1/2. In terms of biological role, part of the phosphoribosylformylglycinamidine synthase complex involved in the purines biosynthetic pathway. Catalyzes the ATP-dependent conversion of formylglycinamide ribonucleotide (FGAR) and glutamine to yield formylglycinamidine ribonucleotide (FGAM) and glutamate. The FGAM synthase complex is composed of three subunits. PurQ produces an ammonia molecule by converting glutamine to glutamate. PurL transfers the ammonia molecule to FGAR to form FGAM in an ATP-dependent manner. PurS interacts with PurQ and PurL and is thought to assist in the transfer of the ammonia molecule from PurQ to PurL. This Granulibacter bethesdensis (strain ATCC BAA-1260 / CGDNIH1) protein is Phosphoribosylformylglycinamidine synthase subunit PurL.